A 728-amino-acid chain; its full sequence is Polyribonucleotide nucleotidyltransferase (728 aa).

Mg(2+) is bound by residues D509 and D515. In terms of domain architecture, KH spans 576–638; the sequence is TKIYTFYIPK…TKLKIAILKI (63 aa). One can recognise an S1 motif domain in the interval 648–715; it reads GTIYKAKVKN…KFRKIKLSHK (68 aa).

The protein belongs to the polyribonucleotide nucleotidyltransferase family. The cofactor is Mg(2+).

The protein localises to the cytoplasm. The catalysed reaction is RNA(n+1) + phosphate = RNA(n) + a ribonucleoside 5'-diphosphate. Functionally, involved in mRNA degradation. Catalyzes the phosphorolysis of single-stranded polyribonucleotides processively in the 3'- to 5'-direction. The sequence is that of Polyribonucleotide nucleotidyltransferase from Karelsulcia muelleri (strain GWSS) (Sulcia muelleri).